Reading from the N-terminus, the 248-residue chain is Uridylate kinase (248 aa).

11-14 (KISG) serves as a coordination point for ATP. G53 contacts UMP. Residues G54 and R58 each contribute to the ATP site. Residues D74 and 135-142 (AGSPYLTT) each bind UMP. The ATP site is built by T162, Y169, and D172.

Belongs to the UMP kinase family. In terms of assembly, homohexamer.

It localises to the cytoplasm. It carries out the reaction UMP + ATP = UDP + ADP. It functions in the pathway pyrimidine metabolism; CTP biosynthesis via de novo pathway; UDP from UMP (UMPK route): step 1/1. With respect to regulation, inhibited by UTP. Functionally, catalyzes the reversible phosphorylation of UMP to UDP. This chain is Uridylate kinase, found in Chlamydia pneumoniae (Chlamydophila pneumoniae).